A 188-amino-acid chain; its full sequence is Inner membrane-spanning protein YciB (188 aa).

5 helical membrane passes run 23-43 (FQKA…IGYA), 49-69 (AMLP…GLIF), 73-93 (VFVK…LVGG), 116-133 (WRTL…VAII), and 149-169 (FRLA…PFMM).

The protein belongs to the YciB family.

It is found in the cell inner membrane. Functionally, plays a role in cell envelope biogenesis, maintenance of cell envelope integrity and membrane homeostasis. The chain is Inner membrane-spanning protein YciB from Caulobacter vibrioides (strain ATCC 19089 / CIP 103742 / CB 15) (Caulobacter crescentus).